We begin with the raw amino-acid sequence, 551 residues long: Cytochrome P450 monooxygenase virE (551 aa).

Positions 1–25 (MPKPWVVFGLGTLVLFLWRLNKIGR) are cleaved as a signal peptide. The N-linked (GlcNAc...) asparagine glycan is linked to Asn392. Position 439 (Cys439) interacts with heme.

Belongs to the cytochrome P450 family. Heme is required as a cofactor.

The protein operates within secondary metabolite biosynthesis. In terms of biological role, cytochrome P450 monooxygenase; part of the gene cluster that mediates the biosynthesis of virensols and trichoxide, fungal natural products that contain or are derived from a salicylaldehyde core. The pathway begins with the synthesis of the reduced chain in virensol C by the highly reducing polyketide synthase virA via condensation of one acetate and 8 malonate units. VirA has interesting programming rules since the first 2 ketides are fully reduced, the 3 following ketides undergo beta-dehydration, and the last 3 ketides are only reduced to beta-hydroxys to yield the trihydroxy portion. The production of aldehyde virensol C by virA alone is surprising, since virA does not contain a reductase (R) domain that is typically associated with reductive product release in HRPKS. The cupin-domain enzyme virC is involved in enhancing virA product turnover. The short-chain dehydrogenase virB then oxidizes the C-7 alcohol of virensol C to a ketone, yielding virensol D. Virensol D is further transformed to salicylaldehyde 5-deoxyaurocitrin by the short-chain dehydrogenase virD. VirD catalyzes the dehydrogenation of C-3 to form the beta-ketone aldehyde, which is followed by the generation of the nucleophilic C-2 that is required for the intramolecular aldol condensation between C-2 and C-7, itself followed by dehydration and aromatization which leads to salicylaldehyde 5-deoxyaurocitrin. While the dehydrogenation of virensol D is definitely catalyzed by virD, the aldol condensation and dehydration may be uncatalyzed or assisted by virD. The short chain dehydrogenase virG then converts salicylaldehyde 5-deoxyaurocitrin into virensol B which is further hydroxylated by the cytochrome P450 monooxygenase virE to yield the hydroquinone virensol A. VirI then may oxidize virensol A to form the quinone, while virH performs the epoxidation. Finally, the two remaining short-chain dehydrogenases, virK and virL, are probably responsible for reducing the ketones to the corresponding alcohols to furnish the epoxycyclohexanol structure in trichoxide. The protein is Cytochrome P450 monooxygenase virE of Hypocrea virens (strain Gv29-8 / FGSC 10586) (Gliocladium virens).